A 172-amino-acid chain; its full sequence is Adenine phosphoribosyltransferase (172 aa).

It belongs to the purine/pyrimidine phosphoribosyltransferase family. In terms of assembly, homodimer.

It localises to the cytoplasm. The enzyme catalyses AMP + diphosphate = 5-phospho-alpha-D-ribose 1-diphosphate + adenine. It functions in the pathway purine metabolism; AMP biosynthesis via salvage pathway; AMP from adenine: step 1/1. Its function is as follows. Catalyzes a salvage reaction resulting in the formation of AMP, that is energically less costly than de novo synthesis. In Streptococcus agalactiae serotype Ia (strain ATCC 27591 / A909 / CDC SS700), this protein is Adenine phosphoribosyltransferase.